The chain runs to 293 residues: Nitrogenase iron protein (293 aa).

Residue 10 to 17 (GKGGIGKS) coordinates ATP. Position 98 (Cys-98) interacts with [4Fe-4S] cluster. Arg-101 is subject to ADP-ribosylarginine; by dinitrogenase reductase ADP-ribosyltransferase. Cys-133 contacts [4Fe-4S] cluster.

This sequence belongs to the NifH/BchL/ChlL family. As to quaternary structure, homodimer. [4Fe-4S] cluster serves as cofactor. In terms of processing, the reversible ADP-ribosylation of Arg-101 inactivates the nitrogenase reductase and regulates nitrogenase activity.

It catalyses the reaction N2 + 8 reduced [2Fe-2S]-[ferredoxin] + 16 ATP + 16 H2O = H2 + 8 oxidized [2Fe-2S]-[ferredoxin] + 2 NH4(+) + 16 ADP + 16 phosphate + 6 H(+). Functionally, the key enzymatic reactions in nitrogen fixation are catalyzed by the nitrogenase complex, which has 2 components: the iron protein and the molybdenum-iron protein. The sequence is that of Nitrogenase iron protein from Pectobacterium atrosepticum (strain SCRI 1043 / ATCC BAA-672) (Erwinia carotovora subsp. atroseptica).